Reading from the N-terminus, the 91-residue chain is UPF0250 protein mma_3250 (91 aa).

This sequence belongs to the UPF0250 family.

This is UPF0250 protein mma_3250 from Janthinobacterium sp. (strain Marseille) (Minibacterium massiliensis).